We begin with the raw amino-acid sequence, 532 residues long: 2,3-bisphosphoglycerate-independent phosphoglycerate mutase (532 aa).

Positions 15 and 65 each coordinate Mn(2+). The Phosphoserine intermediate role is filled by S65. Residues H126, 156 to 157 (RD), R188, R194, 258 to 261 (RPDR), and K331 contribute to the substrate site. The Mn(2+) site is built by D398, H402, D439, H440, and H457.

The protein belongs to the BPG-independent phosphoglycerate mutase family. In terms of assembly, monomer. Mn(2+) serves as cofactor.

It carries out the reaction (2R)-2-phosphoglycerate = (2R)-3-phosphoglycerate. It participates in carbohydrate degradation; glycolysis; pyruvate from D-glyceraldehyde 3-phosphate: step 3/5. Catalyzes the interconversion of 2-phosphoglycerate and 3-phosphoglycerate. The polypeptide is 2,3-bisphosphoglycerate-independent phosphoglycerate mutase (Synechococcus elongatus (strain ATCC 33912 / PCC 7942 / FACHB-805) (Anacystis nidulans R2)).